We begin with the raw amino-acid sequence, 201 residues long: Recombination protein RecR (201 aa).

The C4-type zinc finger occupies 57 to 72 (CSDCRTFTEQDVCAIC). Positions 81 to 176 (GLVCVVESPA…MASRIAHGVP (96 aa)) constitute a Toprim domain.

Belongs to the RecR family.

Functionally, may play a role in DNA repair. It seems to be involved in an RecBC-independent recombinational process of DNA repair. It may act with RecF and RecO. The sequence is that of Recombination protein RecR from Pectobacterium atrosepticum (strain SCRI 1043 / ATCC BAA-672) (Erwinia carotovora subsp. atroseptica).